A 456-amino-acid chain; its full sequence is Esterase MT1326 (456 aa).

3 consecutive LysM domains span residues 3-50, 54-101, and 105-152; these read STHA…RLIM, TRYT…RLIM, and TRYT…VLVI. Residues Ser294, Asp391, and His425 contribute to the active site.

It belongs to the AB hydrolase superfamily.

It is found in the secreted. The protein resides in the cell wall. It carries out the reaction a fatty acid ester + H2O = an aliphatic alcohol + a fatty acid + H(+). Its function is as follows. Exhibits lipolytic activity with medium chain length esters as optimum substrates. The sequence is that of Esterase MT1326 from Mycobacterium tuberculosis (strain CDC 1551 / Oshkosh).